A 701-amino-acid chain; its full sequence is Triadin (701 aa).

Residues 1 to 28 form a disordered region; the sequence is MTEITAEGNASTTTTVIDSKNGSVPKSP. Topologically, residues 1–47 are cytoplasmic; the sequence is MTEITAEGNASTTTTVIDSKNGSVPKSPGKVLKRTVTEDIVTTFSSP. Over residues 8–24 the composition is skewed to polar residues; it reads GNASTTTTVIDSKNGSV. A helical membrane pass occupies residues 48 to 68; that stretch reads AAWLLVIALIITWSAVAVVMF. Over 69–701 the chain is Lumenal; sequence DLVDYKNFSA…SSPGQKQQGQ (633 aa). A glycan (N-linked (GlcNAc...) asparagine) is linked at asparagine 75. Residues 117 to 130 show a composition bias toward acidic residues; it reads DGDEDDDDGDEDTD. Disordered stretches follow at residues 117 to 256, 273 to 654, and 676 to 701; these read DGDE…KHEQ, GDLR…TKRQ, and FPVT…QQGQ. 6 stretches are compositionally biased toward basic and acidic residues: residues 131 to 256, 303 to 351, 365 to 385, 391 to 426, 437 to 485, and 492 to 643; these read KGEI…KHEQ, EGKE…KAPE, AKKD…EEHP, EKKE…KEET, GKKE…EVKP, and VKKE…KAKE. Asparagine 617 carries N-linked (GlcNAc...) asparagine glycosylation. Low complexity predominate over residues 684 to 701; sequence PGESSGQPSSPGQKQQGQ.

In terms of assembly, homooligomer of variable subunit number; disulfide-linked. Interacts with CASQ1 and RYR1 in skeletal muscle. Interacts with CASQ2. Phosphorylated by CaMK2. In terms of processing, N-glycosylated. Detected in heart (at protein level). Skeletal and cardiac muscle.

It is found in the sarcoplasmic reticulum membrane. Contributes to the regulation of lumenal Ca2+ release via the sarcoplasmic reticulum calcium release channels RYR1 and RYR2, a key step in triggering skeletal and heart muscle contraction. Required for normal organization of the triad junction, where T-tubules and the sarcoplasmic reticulum terminal cisternae are in close contact. Required for normal skeletal muscle strength. Plays a role in excitation-contraction coupling in the heart and in regulating the rate of heart beats. The chain is Triadin (TRDN) from Canis lupus familiaris (Dog).